The chain runs to 377 residues: Gap junction gamma-1 protein (377 aa).

Over 1–18 (MSWSFLTRLLEEINNHST) the chain is Cytoplasmic. Residues 19 to 39 (FVGKVWLTVLIIFRIVLTAVG) form a helical membrane-spanning segment. The Extracellular segment spans residues 40-75 (GESIYYDEQSKFTCNTQQPGCENVCYDAFAPLSHVR). The helical transmembrane segment at 76–96 (FWVFQIILITTPSIMYLGFAM) threads the bilayer. Topologically, residues 97–174 (HRIARQPEMQ…RRIKQDGLMK (78 aa)) are cytoplasmic. Residues 129-163 (DYEEAEDNQEEDPMICEEEEPEKDSEKGDKKKHDG) form a disordered region. The span at 131–151 (EEAEDNQEEDPMICEEEEPEK) shows a compositional bias: acidic residues. Residues 175–197 (VYVLQLLFRSVFEVGFLMGQYIL) traverse the membrane as a helical segment. The Extracellular portion of the chain corresponds to 198–228 (YGFEVIPFFVCSRKPCPHTVDCFVSRPTEKT). The chain crosses the membrane as a helical span at residues 229–249 (IFLLIMYAVSALCLFLNLCEL). The Cytoplasmic portion of the chain corresponds to 250–377 (FHLGIGGIRD…GVGNREKSGL (128 aa)). Disordered stretches follow at residues 265–294 (KKEL…LPNG) and 334–377 (LNPT…KSGL). Positions 337–362 (TGDNTHASRSSSPESNSIAAEQNRLN) are enriched in polar residues.

Belongs to the connexin family. Gamma-type subfamily. In terms of assembly, a connexon is composed of a hexamer of connexins.

The protein localises to the cell membrane. Its subcellular location is the cell junction. It is found in the gap junction. In terms of biological role, one gap junction consists of a cluster of closely packed pairs of transmembrane channels, the connexons, through which materials of low MW diffuse from one cell to a neighboring cell. The sequence is that of Gap junction gamma-1 protein (gjc1) from Xenopus tropicalis (Western clawed frog).